The sequence spans 191 residues: Transposon Tn1546 resolvase (191 aa).

Residues 2–138 (RKIGYIRVSS…EGIELAKKEG (137 aa)) enclose the Resolvase/invertase-type recombinase catalytic domain. Catalysis depends on S10, which acts as the O-(5'-phospho-DNA)-serine intermediate. Positions 168–187 (VNQICEITNVSRASLYRKLS) form a DNA-binding region, H-T-H motif.

This sequence belongs to the site-specific recombinase resolvase family.

Functionally, resolvase catalyzes the resolution (a site-specific recombination) of the cointegrated replicon to yield the final transposition products. In Enterococcus faecium (Streptococcus faecium), this protein is Transposon Tn1546 resolvase.